The primary structure comprises 155 residues: Small ribosomal subunit protein uS7cz/uS7cy (155 aa).

The protein belongs to the universal ribosomal protein uS7 family. As to quaternary structure, part of the 30S ribosomal subunit.

It localises to the plastid. The protein resides in the chloroplast. In terms of biological role, one of the primary rRNA binding proteins, it binds directly to 16S rRNA where it nucleates assembly of the head domain of the 30S subunit. The protein is Small ribosomal subunit protein uS7cz/uS7cy (rps7-A) of Nandina domestica (Heavenly bamboo).